The following is a 414-amino-acid chain: MTTQRSPGLFRRLAHGSLVKQILVGLVLGILLAWISKPAAEAVGLLGTLFVGALKAVAPILVLMLVMASIANHQHGQKTNIRPILFLYLLGTFSAALAAVVFSFAFPSTLHLSSSAGDISPPSGIVEVMRGLVMSMVSNPIDALLKGNYIGILVWAIGLGFALRHGNETTKNLVNDMSNAVTFMVKLVIRFAPIGIFGLVSSTLATTGFSTLWGYAQLLVVLVGCMLLVALVVNPLLVWWKIRRNPFPLVLLCLRESGVYAFFTRSSAANIPVNMALCEKLNLDRDTYSVSIPLGATINMAGAAITITVLTLAAVNTLGIPVDLPTALLLSVVASLCACGASGVAGGSLLLIPLACNMFGISNDIAMQVVAVGFIIGVLQDSCETALNSSTDVLFTAAACQAEDDRLANSALRN.

Topologically, residues Thr-2–His-15 are cytoplasmic. A helical transmembrane segment spans residues Gly-16–Ser-36. Topologically, residues Lys-37–Leu-45 are periplasmic. Residues Leu-46–Val-66 traverse the membrane as a helical segment. At Met-67–Pro-83 the chain is on the cytoplasmic side. Residues Ile-84–Phe-104 traverse the membrane as a helical segment. The Periplasmic segment spans residues Ala-105–Asp-142. A helical transmembrane segment spans residues Ala-143–Leu-163. The Cytoplasmic portion of the chain corresponds to Arg-164–Asn-179. The helical transmembrane segment at Ala-180–Val-200 threads the bilayer. Topologically, residues Ser-201 to Gln-217 are periplasmic. The chain crosses the membrane as a helical span at residues Leu-218–Val-238. The Cytoplasmic segment spans residues Trp-239 to Asn-299. The chain crosses the membrane as a helical span at residues Met-300 to Ile-320. The Periplasmic segment spans residues Pro-321–Ser-331. Residues Val-332–Ile-352 form a helical membrane-spanning segment. The Cytoplasmic portion of the chain corresponds to Pro-353–Asn-414.

It belongs to the dicarboxylate/amino acid:cation symporter (DAACS) (TC 2.A.23) family.

The protein resides in the cell inner membrane. The catalysed reaction is L-serine(in) + Na(+)(in) = L-serine(out) + Na(+)(out). It carries out the reaction L-threonine(in) + Na(+)(in) = L-threonine(out) + Na(+)(out). Involved in the import of serine and threonine into the cell, with the concomitant import of sodium (symport system). The chain is Serine/threonine transporter SstT from Shigella flexneri serotype 5b (strain 8401).